The primary structure comprises 398 residues: 2,3,4,5-tetrahydropyridine-2,6-dicarboxylate N-succinyltransferase (398 aa).

The Acyl-anhydride intermediate role is filled by Glu-268. Residues Arg-270, Gly-285, Ser-288, Ala-311, 326-327 (DG), Gly-334, Lys-361, and 374-377 (RQNS) contribute to the succinyl-CoA site.

This sequence belongs to the type 2 tetrahydrodipicolinate N-succinyltransferase family. As to quaternary structure, homotrimer.

The protein resides in the cytoplasm. The enzyme catalyses (S)-2,3,4,5-tetrahydrodipicolinate + succinyl-CoA + H2O = (S)-2-succinylamino-6-oxoheptanedioate + CoA. It participates in amino-acid biosynthesis; L-lysine biosynthesis via DAP pathway; LL-2,6-diaminopimelate from (S)-tetrahydrodipicolinate (succinylase route): step 1/3. In terms of biological role, catalyzes the conversion of the cyclic tetrahydrodipicolinate (THDP) into the acyclic N-succinyl-L-2-amino-6-oxopimelate using succinyl-CoA. The polypeptide is 2,3,4,5-tetrahydropyridine-2,6-dicarboxylate N-succinyltransferase (Sulfurimonas denitrificans (strain ATCC 33889 / DSM 1251) (Thiomicrospira denitrificans (strain ATCC 33889 / DSM 1251))).